A 299-amino-acid polypeptide reads, in one-letter code: Ribosomal protein L11 methyltransferase (299 aa).

S-adenosyl-L-methionine contacts are provided by Thr150, Gly171, Asp193, and Asn234.

This sequence belongs to the methyltransferase superfamily. PrmA family.

The protein resides in the cytoplasm. The catalysed reaction is L-lysyl-[protein] + 3 S-adenosyl-L-methionine = N(6),N(6),N(6)-trimethyl-L-lysyl-[protein] + 3 S-adenosyl-L-homocysteine + 3 H(+). In terms of biological role, methylates ribosomal protein L11. This is Ribosomal protein L11 methyltransferase from Dictyoglomus turgidum (strain DSM 6724 / Z-1310).